A 213-amino-acid chain; its full sequence is ATP-dependent dethiobiotin synthetase BioD (213 aa).

12-17 is a binding site for ATP; the sequence is NVGKTF. Position 16 (T16) interacts with Mg(2+). K36 is an active-site residue. Position 40 (S40) interacts with substrate. Residues D53, 110 to 113, and 170 to 171 contribute to the ATP site; these read EGTG and NQ. The Mg(2+) site is built by D53 and E110.

It belongs to the dethiobiotin synthetase family. In terms of assembly, homodimer. Requires Mg(2+) as cofactor.

The protein localises to the cytoplasm. The enzyme catalyses (7R,8S)-7,8-diammoniononanoate + CO2 + ATP = (4R,5S)-dethiobiotin + ADP + phosphate + 3 H(+). The protein operates within cofactor biosynthesis; biotin biosynthesis; biotin from 7,8-diaminononanoate: step 1/2. Its function is as follows. Catalyzes a mechanistically unusual reaction, the ATP-dependent insertion of CO2 between the N7 and N8 nitrogen atoms of 7,8-diaminopelargonic acid (DAPA, also called 7,8-diammoniononanoate) to form a ureido ring. The polypeptide is ATP-dependent dethiobiotin synthetase BioD (Ruthia magnifica subsp. Calyptogena magnifica).